The chain runs to 126 residues: Anti-adapter protein IraD (126 aa).

Belongs to the GpW/Gp25 family. IraD subfamily. Interacts with RssB.

Its subcellular location is the cytoplasm. In terms of biological role, inhibits RpoS proteolysis by regulating RssB activity, thereby increasing the stability of the sigma stress factor RpoS during oxidative stress. Its effect on RpoS stability is due to its interaction with RssB, which probably blocks the interaction of RssB with RpoS, and the consequent delivery of the RssB-RpoS complex to the ClpXP protein degradation pathway. The protein is Anti-adapter protein IraD of Salmonella enteritidis PT4 (strain P125109).